The primary structure comprises 360 residues: Cuticle collagen dpy-2 (360 aa).

Triple-helical region regions lie at residues 123-152, 174-230, and 238-303; these read GERGPSGDSGLPALPGAPGPDGAPGRPGTT, GPRG…KGRT, and GPPG…PGTC. 2 disordered regions span residues 127–158 and 174–360; these read PSGDSGLPALPGAPGPDGAPGRPGTTPNASCI and GPRG…IRKW. Over residues 189-198 the composition is skewed to gly residues; the sequence is GEYGIGGRPG. A compositionally biased stretch (low complexity) spans 242 to 258; it reads DSGLPGPWGPPGSAGMP. The span at 273–288 shows a compositional bias: pro residues; sequence PGPPGAPGPGGMPGPN.

It belongs to the cuticular collagen family. Collagen polypeptide chains are complexed within the cuticle by disulfide bonds and other types of covalent cross-links.

Functionally, nematode cuticles are composed largely of collagen-like proteins. The cuticle functions both as an exoskeleton and as a barrier to protect the worm from its environment. Mutations in dpy-2 affects the body shape. This Caenorhabditis elegans protein is Cuticle collagen dpy-2 (dpy-2).